Reading from the N-terminus, the 147-residue chain is Globin (147 aa).

Residue Ser-2 is modified to N-acetylserine. The Globin domain maps to 2–147; sequence SLSAAEADLA…IIDALKAAGK (146 aa). Heme b is bound at residue His-96.

The protein belongs to the globin family. In terms of assembly, monomer.

The chain is Globin from Aplysia limacina (Sea hare).